Reading from the N-terminus, the 236-residue chain is Phosphoribosylformylglycinamidine synthase subunit PurQ (236 aa).

The Glutamine amidotransferase type-1 domain maps to 2–234 (RFAVVTFPGS…LSVGLEVAHS (233 aa)). Cys-86 serves as the catalytic Nucleophile. Active-site residues include His-203 and Glu-205.

In terms of assembly, part of the FGAM synthase complex composed of 1 PurL, 1 PurQ and 2 PurS subunits.

It is found in the cytoplasm. The enzyme catalyses N(2)-formyl-N(1)-(5-phospho-beta-D-ribosyl)glycinamide + L-glutamine + ATP + H2O = 2-formamido-N(1)-(5-O-phospho-beta-D-ribosyl)acetamidine + L-glutamate + ADP + phosphate + H(+). It catalyses the reaction L-glutamine + H2O = L-glutamate + NH4(+). Its pathway is purine metabolism; IMP biosynthesis via de novo pathway; 5-amino-1-(5-phospho-D-ribosyl)imidazole from N(2)-formyl-N(1)-(5-phospho-D-ribosyl)glycinamide: step 1/2. Its function is as follows. Part of the phosphoribosylformylglycinamidine synthase complex involved in the purines biosynthetic pathway. Catalyzes the ATP-dependent conversion of formylglycinamide ribonucleotide (FGAR) and glutamine to yield formylglycinamidine ribonucleotide (FGAM) and glutamate. The FGAM synthase complex is composed of three subunits. PurQ produces an ammonia molecule by converting glutamine to glutamate. PurL transfers the ammonia molecule to FGAR to form FGAM in an ATP-dependent manner. PurS interacts with PurQ and PurL and is thought to assist in the transfer of the ammonia molecule from PurQ to PurL. This is Phosphoribosylformylglycinamidine synthase subunit PurQ from Thermomicrobium roseum (strain ATCC 27502 / DSM 5159 / P-2).